We begin with the raw amino-acid sequence, 136 residues long: Large-conductance mechanosensitive channel (136 aa).

The next 2 membrane-spanning stretches (helical) occupy residues 9–29 and 79–99; these read AFAS…GAAF and IQTV…LKAI.

The protein belongs to the MscL family. In terms of assembly, homopentamer.

It is found in the cell inner membrane. Channel that opens in response to stretch forces in the membrane lipid bilayer. May participate in the regulation of osmotic pressure changes within the cell. The polypeptide is Large-conductance mechanosensitive channel (Shewanella putrefaciens (strain CN-32 / ATCC BAA-453)).